Reading from the N-terminus, the 757-residue chain is MNITQILSQELSATAAQITAAVELLDDGATVPFIARYRKEATGGLDDTQLRRLAERLQYLRELEERKAVVLKSIEEQGKLSDDLRAQIEAADNKTALEDLYLPYKPKRRTKAQIAREHGLQPLADVLLAEQSQDVEAAAQGYLNENVPDAKAALDGARAILMEQFAEDAELIGTLRDKLWNEAEIHAQVVEGKETEGEKFSDYFDHREPVRTMPSHRALAVLRGRNEGVLNIALKYQPDDTPITRQSEYEQIIACRFKVSDGHKWLRDTVRLTWRAKIFLSLELEALGRLKEAADTDAITVFARNLKDLLLVAPAGRLTTLGLDPGYRNGVKCAVVDDTGKLLDTVIVYLHQENNMLATLSRLIKQHGVKLIAIGNGTASRETDKIAGELVRGMPEMGLHKIVVSEAGASIYSASELAAREFPDLDVSLRGAVSIARRLQDPLAELVKIDPKSIGVGQYQHDVNQNQLAKSLDAVVEDCVNAVGVDVNTASAPLLARISGLNQTLAQNIVAYRDENGAFDSRKKLLKVPRLGEKTFEQAAGFLRINGGKEPLDASAVHPEAYPVVAKMLAQQGISAAELIGNRERVKQIKASDFTDERFGLPTILDILSELEKPGRDPRGEFQTASFAEGIHEISDLQVGMILEGVVSNVANFGAFVDIGVHQDGLVHISALSNKFVQDPREVVKAGDVVKVKVLEVDAARKRIALTMRLDDEPGGAKHKMPSENRSRERTAGRKPQRNDRAPANSAMADAFAKLKR.

In terms of domain architecture, S1 motif spans 640–709 (GMILEGVVSN…ARKRIALTMR (70 aa)). Residues 711–741 (DDEPGGAKHKMPSENRSRERTAGRKPQRNDR) are compositionally biased toward basic and acidic residues. A disordered region spans residues 711–757 (DDEPGGAKHKMPSENRSRERTAGRKPQRNDRAPANSAMADAFAKLKR).

This is an uncharacterized protein from Neisseria meningitidis serogroup B (strain ATCC BAA-335 / MC58).